The primary structure comprises 442 residues: Histidinol dehydrogenase (442 aa).

Tyr-138, Gln-199, and Asn-222 together coordinate NAD(+). The substrate site is built by Ser-245, Gln-267, and His-270. 2 residues coordinate Zn(2+): Gln-267 and His-270. Active-site proton acceptor residues include Glu-335 and His-336. Substrate contacts are provided by His-336, Asp-369, Glu-423, and His-428. Asp-369 contributes to the Zn(2+) binding site. His-428 serves as a coordination point for Zn(2+).

The protein belongs to the histidinol dehydrogenase family. Requires Zn(2+) as cofactor.

The catalysed reaction is L-histidinol + 2 NAD(+) + H2O = L-histidine + 2 NADH + 3 H(+). It participates in amino-acid biosynthesis; L-histidine biosynthesis; L-histidine from 5-phospho-alpha-D-ribose 1-diphosphate: step 9/9. Its function is as follows. Catalyzes the sequential NAD-dependent oxidations of L-histidinol to L-histidinaldehyde and then to L-histidine. This Ralstonia nicotianae (strain ATCC BAA-1114 / GMI1000) (Ralstonia solanacearum) protein is Histidinol dehydrogenase.